A 304-amino-acid polypeptide reads, in one-letter code: Protease HtpX homolog (304 aa).

Transmembrane regions (helical) follow at residues 19 to 39 (FIVFIIYFLLFFVCYAVVSYF) and 41 to 61 (LGEIGIIIAFLIVLFTNYYAY). His146 contacts Zn(2+). Glu147 is a catalytic residue. His150 is a binding site for Zn(2+). Transmembrane regions (helical) follow at residues 156-176 (VRLQTIAAVMVGLIVILGDGL) and 192-212 (NILGIVSLIIAILAPFLATLL). Zn(2+) is bound at residue Glu221.

It belongs to the peptidase M48B family. The cofactor is Zn(2+).

Its subcellular location is the cell inner membrane. This Dictyoglomus turgidum (strain DSM 6724 / Z-1310) protein is Protease HtpX homolog.